A 178-amino-acid chain; its full sequence is Large ribosomal subunit protein uL6 (178 aa).

The protein belongs to the universal ribosomal protein uL6 family. Part of the 50S ribosomal subunit.

Its function is as follows. This protein binds to the 23S rRNA, and is important in its secondary structure. It is located near the subunit interface in the base of the L7/L12 stalk, and near the tRNA binding site of the peptidyltransferase center. The protein is Large ribosomal subunit protein uL6 of Streptococcus mutans serotype c (strain ATCC 700610 / UA159).